A 1785-amino-acid chain; its full sequence is 1,3-beta-glucan synthase component FKS3 (1785 aa).

8 helical membrane-spanning segments follow: residues 337 to 357, 375 to 395, 415 to 435, 444 to 464, 508 to 528, 547 to 567, 572 to 592, and 712 to 732; these read FWIIHFAPFWFFTTFNSPTLY, LSVIAFGGTIACLVQILATVF, IGLLFCLAINLGPSVYVLGFF, AYIVSIVQLIIAFLTTFFFAV, LWVFVYLAKYIESYFFLTLSL, YLLGPILCKWQAKITLVLMLL, LFFLDTYLWYIICNCIFSIVL, and LATPISEPVPVDCMPTFTVLV. Basic and acidic residues-rich tracts occupy residues 791–801 and 815–824; these read ESSHDEDRLEI and DHTESRKLPT. The interval 791–824 is disordered; the sequence is ESSHDEDRLEIPDALYDPRSSPLSDHTESRKLPT. Asn844, Asn874, Asn955, Asn1002, and Asn1170 each carry an N-linked (GlcNAc...) asparagine glycan. 3 consecutive transmembrane segments (helical) span residues 1215–1235, 1268–1288, and 1303–1323; these read LFISFSVQLFFVLLLNLGALN, VSIFVLSIFIVFFIAFAPLLI, and FLHHLLSMAPLFEVFVCQVYS. Asn1360 carries an N-linked (GlcNAc...) asparagine glycan. A run of 5 helical transmembrane segments spans residues 1370–1390, 1394–1414, 1475–1495, 1514–1534, and 1549–1569; these read FFMLLFAIISMWQPALLWFWI, SMCFAPFIFNPHQFAFMDFFI, FAELFLPFCVFLFNFTAFSFI, LLVTFLPIFLNSIVLFLLFWV, and AGAVIAFIAHTFSVLVYLLDF. Asn1579 carries N-linked (GlcNAc...) asparagine glycosylation. 3 consecutive transmembrane segments (helical) span residues 1585–1605, 1655–1675, and 1713–1733; these read ILLITCINMHLILFKVFTTIF, FFLGHFLLFIQTPIILLPFID, and FSLYFVMLGVLLFMLIAPFFA. The N-linked (GlcNAc...) asparagine glycan is linked to Asn1761.

The protein belongs to the glycosyltransferase 48 family. Post-translationally, N-glycosylated.

It is found in the mitochondrion. The protein resides in the membrane. It carries out the reaction [(1-&gt;3)-beta-D-glucosyl](n) + UDP-alpha-D-glucose = [(1-&gt;3)-beta-D-glucosyl](n+1) + UDP + H(+). In terms of biological role, required for spore wall assembly. The sequence is that of 1,3-beta-glucan synthase component FKS3 (FKS3) from Saccharomyces cerevisiae (strain ATCC 204508 / S288c) (Baker's yeast).